We begin with the raw amino-acid sequence, 60 residues long: Large ribosomal subunit protein uL30 (60 aa).

Belongs to the universal ribosomal protein uL30 family. As to quaternary structure, part of the 50S ribosomal subunit.

This is Large ribosomal subunit protein uL30 from Xanthobacter autotrophicus (strain ATCC BAA-1158 / Py2).